Reading from the N-terminus, the 269-residue chain is Protein TORNADO 2 (269 aa).

Topologically, residues 1–10 (MPLSNNVIGC) are cytoplasmic. A helical membrane pass occupies residues 11–31 (INFITVLLSIPVIGAGIWLAI). Residues 32 to 44 (GTVNSCVKLLQWP) are Extracellular-facing. A helical transmembrane segment spans residues 45-65 (VIILGVLILLVGLAGFIGGFW). Over 66–71 (RITWLL) the chain is Cytoplasmic. A helical membrane pass occupies residues 72 to 92 (VVYLIAMLILIVLLGCLVGFI). At 93–231 (YMVTIRGSGH…NIKVDWLKAD (139 aa)) the chain is on the extracellular side. Asn200 carries N-linked (GlcNAc...) asparagine glycosylation. A helical membrane pass occupies residues 232-252 (IFLLLALIGLIIVYIIGCCAF). Residues 253 to 269 (RNAETEDIFRKYKQGYT) lie on the Cytoplasmic side of the membrane.

The protein belongs to the tetraspanin (TM4SF) family. As to expression, expressed in seedlings, roots, leaves, stems, apex, siliques and flowers. Present in ovules, prominently in nucellus and integuments.

The protein localises to the membrane. In terms of biological role, involved in the basipetal transport of auxin (IAA) that modulates growth and organs organization, as well as cell differentiation. Regulates shoot apical meristem (SAM) organization in the peripheral zone. Required for initial meristematic divisions in the epidermal/lateral root cap leading to the formation of epidermal cells and a clone of lateral root cap cells, as well as for the maintenance of the radial pattern of cell specification in the root, thus regulating the distinction between the lateral root cap and epidermis. Together with WIH peptides, promotes megasporogenesis. This Arabidopsis thaliana (Mouse-ear cress) protein is Protein TORNADO 2 (TRN2).